The chain runs to 345 residues: Ananain (345 aa).

The N-terminal stretch at 1–24 (MTSKVQLVFLFLFLCVMWASPSAA) is a signal peptide. The propeptide at 25–122 (SCDEPSDPMM…VSFDDVDISS (98 aa)) is activation peptide. 3 disulfide bridges follow: Cys-144–Cys-184, Cys-178–Cys-217, and Cys-273–Cys-325. Residue Cys-147 is part of the active site. Cys-147 provides a ligand contact to E64. Catalysis depends on residues His-279 and Asn-300.

As to expression, stem (at protein level).

The catalysed reaction is Hydrolysis of proteins with broad specificity for peptide bonds. Best reported small molecule substrate Bz-Phe-Val-Arg-|-NHMec, but broader specificity than fruit bromelain.. With respect to regulation, strongly inhibited by chicken egg-white cystatin. Inhibited by iodoacetamide and the active-site-directed inhibitor E64 (L-trans-epoxysuccinyl-leucylamide-(4-guanido)-butane). Functionally, cysteine protease. Displays a high level of diversity in substrate specificity at the P1-P1' cleavage site. A hydrophilic P1 residue is preferred, with Gln or Arg strongly preferred. Favors an Ile/Leu residue at the P2 position of substrates, with an overall higher preference for Leu. The optimal tripeptide for cleavage is Pro-Leu-Gln, with cleavage occurring after the Gln residue. Another optimal tripeptide is Val-Leu-Arg, which may imply that a hydrophobic residue at the P3 position of substrates is preferred. The protein is Ananain of Ananas comosus (Pineapple).